Reading from the N-terminus, the 155-residue chain is Microsomal glutathione S-transferase 1 (155 aa).

Over 3-9 the chain is Lumenal; sequence DLRQLMD. The helical transmembrane segment at 10 to 33 threads the bilayer; that stretch reads NEVLMAFTSYATIILTKMMFMSSA. Topologically, residues 34-62 are cytoplasmic; it reads TAFQRITNKVFANPEDCAGFGKGENAKKF. Arg-38 serves as a coordination point for glutathione. An N6-acetyllysine mark is found at Lys-42, Lys-55, and Lys-60. The helical transmembrane segment at 63–96 threads the bilayer; the sequence is VRTDEKVERVRRAHLNDLENIVPFLGIGLLYSLS. Residues Arg-73, Arg-74, His-76, and Glu-81 each contribute to the glutathione site. Topologically, residues 97 to 99 are lumenal; it reads GPD. A helical transmembrane segment spans residues 100-123; sequence LSTALMHFRIFVGARIYHTIAYLT. Tyr-121 contributes to the glutathione binding site. At 124 to 128 the chain is on the cytoplasmic side; sequence PLPQP. A helical transmembrane segment spans residues 129-148; the sequence is NRGLAFFVGYGVTLSMAYRL. The Lumenal segment spans residues 149–155; it reads LRSRLYL.

The protein belongs to the MAPEG family. In terms of assembly, homotrimer; The trimer binds only one molecule of glutathione. In terms of processing, acetylation of Lys-42 and Lys-55 is observed in liver mitochondria from fasted mice but not from fed mice. As to expression, expressed in the testes (at protein level).

It is found in the endoplasmic reticulum membrane. The protein localises to the mitochondrion outer membrane. It catalyses the reaction RX + glutathione = an S-substituted glutathione + a halide anion + H(+). Its function is as follows. Conjugation of reduced glutathione to a wide number of exogenous and endogenous hydrophobic electrophiles. The sequence is that of Microsomal glutathione S-transferase 1 (Mgst1) from Mus musculus (Mouse).